The primary structure comprises 108 residues: Circadian clock oscillator protein KaiB (108 aa).

The protein belongs to the KaiB family. As to quaternary structure, may undergo a major conformational rearrangment; in the free state forms homooligomers. When bound to KaiC switches to a monomeric thioredoxin-fold (KaiB(fs)). The active oscillator complex is probably KaiC(6):KaiB(6).

Its function is as follows. Component of the KaiBC clock protein complex, which constitutes the main circadian regulator in cyanobacteria; it may modify the ATPase activity of KaiC. In terms of biological role, may be a metamorphic protein which reversibly switches between an inactive tetrameric fold and a rare, thioredoxin-like monomeric fold (KaiB(fs)). KaiB(fs) binds phospho-KaiC, and perhaps clock output effectors. This Prochlorococcus marinus (strain MIT 9515) protein is Circadian clock oscillator protein KaiB.